The chain runs to 123 residues: MQVWPPLGLKKFETLSYLPPLTTEQLLAEVNYLLVKGWIPPLEFEVKDGFVYREHDKSPGYYDGRYWTMWKLPMFGGTDPAQVVNEVEEVKKAPPDAFVRFIGFNDKREVQCISFIAYKPAGY.

At Met-1 the chain carries Methionine derivative.

Belongs to the RuBisCO small chain family. Heterohexadecamer of 8 large and 8 small subunits.

It localises to the plastid. It is found in the chloroplast. In terms of biological role, ruBisCO catalyzes two reactions: the carboxylation of D-ribulose 1,5-bisphosphate, the primary event in carbon dioxide fixation, as well as the oxidative fragmentation of the pentose substrate. Both reactions occur simultaneously and in competition at the same active site. Although the small subunit is not catalytic it is essential for maximal activity. The sequence is that of Ribulose bisphosphate carboxylase small subunit, chloroplastic 1 from Spinacia oleracea (Spinach).